Here is a 142-residue protein sequence, read N- to C-terminus: Large ribosomal subunit protein uL22 (142 aa).

The segment at 122–142 (RAEAPEETKPSRGTNKEQKAA) is disordered.

Belongs to the universal ribosomal protein uL22 family. In terms of assembly, part of the 50S ribosomal subunit.

Its function is as follows. This protein binds specifically to 23S rRNA; its binding is stimulated by other ribosomal proteins, e.g. L4, L17, and L20. It is important during the early stages of 50S assembly. It makes multiple contacts with different domains of the 23S rRNA in the assembled 50S subunit and ribosome. In terms of biological role, the globular domain of the protein is located near the polypeptide exit tunnel on the outside of the subunit, while an extended beta-hairpin is found that lines the wall of the exit tunnel in the center of the 70S ribosome. In Gluconobacter oxydans (strain 621H) (Gluconobacter suboxydans), this protein is Large ribosomal subunit protein uL22.